The sequence spans 511 residues: Sodium/proline symporter (511 aa).

Transmembrane regions (helical) follow at residues 16–36 (WQTY…GFYG), 54–74 (IGPY…WMIM), 85–105 (LSAI…YFVV), 139–159 (IISG…GFVS), 175–195 (GLLI…YLAV), 199–219 (DFFQ…VALL), 246–266 (VLGI…PHII), 284–304 (LGIS…LTGI), 327–347 (ILFH…AIMS), 381–401 (FVLI…TIAW), 407–427 (ILNL…PLVL), 438–458 (AGAI…ISWI), and 467–487 (FFGM…TYIV).

Belongs to the sodium:solute symporter (SSF) (TC 2.A.21) family.

Its subcellular location is the cell membrane. The catalysed reaction is L-proline(in) + Na(+)(in) = L-proline(out) + Na(+)(out). In terms of biological role, catalyzes the sodium-dependent uptake of extracellular L-proline. The chain is Sodium/proline symporter (putP) from Staphylococcus epidermidis (strain ATCC 12228 / FDA PCI 1200).